A 690-amino-acid polypeptide reads, in one-letter code: Elongation factor G (690 aa).

The region spanning 8–283 is the tr-type G domain; it reads EYIRNIGICA…AVVGFLPSPI (276 aa). GTP contacts are provided by residues 17 to 24, 81 to 85, and 135 to 138; these read AHIDAGKT, DTPGH, and NKMD.

Belongs to the TRAFAC class translation factor GTPase superfamily. Classic translation factor GTPase family. EF-G/EF-2 subfamily.

It is found in the cytoplasm. Catalyzes the GTP-dependent ribosomal translocation step during translation elongation. During this step, the ribosome changes from the pre-translocational (PRE) to the post-translocational (POST) state as the newly formed A-site-bound peptidyl-tRNA and P-site-bound deacylated tRNA move to the P and E sites, respectively. Catalyzes the coordinated movement of the two tRNA molecules, the mRNA and conformational changes in the ribosome. This chain is Elongation factor G, found in Rickettsia canadensis (strain McKiel).